A 252-amino-acid chain; its full sequence is Phosphatidylserine decarboxylase proenzyme (252 aa).

S211 acts as the Schiff-base intermediate with substrate; via pyruvic acid in catalysis. S211 is modified (pyruvic acid (Ser); by autocatalysis).

This sequence belongs to the phosphatidylserine decarboxylase family. PSD-A subfamily. As to quaternary structure, heterodimer of a large membrane-associated beta subunit and a small pyruvoyl-containing alpha subunit. Requires pyruvate as cofactor. In terms of processing, is synthesized initially as an inactive proenzyme. Formation of the active enzyme involves a self-maturation process in which the active site pyruvoyl group is generated from an internal serine residue via an autocatalytic post-translational modification. Two non-identical subunits are generated from the proenzyme in this reaction, and the pyruvate is formed at the N-terminus of the alpha chain, which is derived from the carboxyl end of the proenzyme. The post-translation cleavage follows an unusual pathway, termed non-hydrolytic serinolysis, in which the side chain hydroxyl group of the serine supplies its oxygen atom to form the C-terminus of the beta chain, while the remainder of the serine residue undergoes an oxidative deamination to produce ammonia and the pyruvoyl prosthetic group on the alpha chain.

It is found in the cell membrane. It catalyses the reaction a 1,2-diacyl-sn-glycero-3-phospho-L-serine + H(+) = a 1,2-diacyl-sn-glycero-3-phosphoethanolamine + CO2. It functions in the pathway phospholipid metabolism; phosphatidylethanolamine biosynthesis; phosphatidylethanolamine from CDP-diacylglycerol: step 2/2. Catalyzes the formation of phosphatidylethanolamine (PtdEtn) from phosphatidylserine (PtdSer). The polypeptide is Phosphatidylserine decarboxylase proenzyme (Novosphingobium aromaticivorans (strain ATCC 700278 / DSM 12444 / CCUG 56034 / CIP 105152 / NBRC 16084 / F199)).